A 431-amino-acid chain; its full sequence is Glutamate-1-semialdehyde 2,1-aminomutase (431 aa).

N6-(pyridoxal phosphate)lysine is present on lysine 269.

It belongs to the class-III pyridoxal-phosphate-dependent aminotransferase family. HemL subfamily. Homodimer. Pyridoxal 5'-phosphate serves as cofactor.

It localises to the cytoplasm. It carries out the reaction (S)-4-amino-5-oxopentanoate = 5-aminolevulinate. Its pathway is porphyrin-containing compound metabolism; protoporphyrin-IX biosynthesis; 5-aminolevulinate from L-glutamyl-tRNA(Glu): step 2/2. The protein operates within porphyrin-containing compound metabolism; chlorophyll biosynthesis. This is Glutamate-1-semialdehyde 2,1-aminomutase from Prosthecochloris aestuarii (strain DSM 271 / SK 413).